The following is a 141-amino-acid chain: Large ribosomal subunit protein uL11 (141 aa).

Belongs to the universal ribosomal protein uL11 family. Part of the ribosomal stalk of the 50S ribosomal subunit. Interacts with L10 and the large rRNA to form the base of the stalk. L10 forms an elongated spine to which L12 dimers bind in a sequential fashion forming a multimeric L10(L12)X complex. One or more lysine residues are methylated.

Functionally, forms part of the ribosomal stalk which helps the ribosome interact with GTP-bound translation factors. The chain is Large ribosomal subunit protein uL11 from Streptococcus thermophilus (strain CNRZ 1066).